The chain runs to 254 residues: Nickel import ATP-binding protein NikD (254 aa).

An ABC transporter domain is found at 2–241 (PQQIELRNIA…PKHAVTRSLV (240 aa)). Residue 36–43 (GGSGSGKS) coordinates ATP.

The protein belongs to the ABC transporter superfamily. Nickel importer (TC 3.A.1.5.3) family. In terms of assembly, the complex is composed of two ATP-binding proteins (NikD and NikE), two transmembrane proteins (NikB and NikC) and a solute-binding protein (NikA).

It is found in the cell inner membrane. The catalysed reaction is Ni(2+)(out) + ATP + H2O = Ni(2+)(in) + ADP + phosphate + H(+). Its function is as follows. Part of the ABC transporter complex NikABCDE involved in nickel import. Responsible for energy coupling to the transport system. The polypeptide is Nickel import ATP-binding protein NikD (Escherichia coli (strain UTI89 / UPEC)).